The following is a 269-amino-acid chain: Bifunctional protein FolD (269 aa).

NADP(+) contacts are provided by residues 149–151 and Val-215; that span reads GLG.

Belongs to the tetrahydrofolate dehydrogenase/cyclohydrolase family. As to quaternary structure, homodimer.

The catalysed reaction is (6R)-5,10-methylene-5,6,7,8-tetrahydrofolate + NADP(+) = (6R)-5,10-methenyltetrahydrofolate + NADPH. The enzyme catalyses (6R)-5,10-methenyltetrahydrofolate + H2O = (6R)-10-formyltetrahydrofolate + H(+). It functions in the pathway one-carbon metabolism; tetrahydrofolate interconversion. In terms of biological role, catalyzes the oxidation of 5,10-methylenetetrahydrofolate to 5,10-methenyltetrahydrofolate and then the hydrolysis of 5,10-methenyltetrahydrofolate to 10-formyltetrahydrofolate. The protein is Bifunctional protein FolD of Mycoplasma pneumoniae (strain ATCC 29342 / M129 / Subtype 1) (Mycoplasmoides pneumoniae).